A 302-amino-acid polypeptide reads, in one-letter code: Sulfate adenylyltransferase subunit 2 (302 aa).

Belongs to the PAPS reductase family. CysD subfamily. In terms of assembly, heterodimer composed of CysD, the smaller subunit, and CysN.

It carries out the reaction sulfate + ATP + H(+) = adenosine 5'-phosphosulfate + diphosphate. Its pathway is sulfur metabolism; hydrogen sulfide biosynthesis; sulfite from sulfate: step 1/3. In terms of biological role, with CysN forms the ATP sulfurylase (ATPS) that catalyzes the adenylation of sulfate producing adenosine 5'-phosphosulfate (APS) and diphosphate, the first enzymatic step in sulfur assimilation pathway. APS synthesis involves the formation of a high-energy phosphoric-sulfuric acid anhydride bond driven by GTP hydrolysis by CysN coupled to ATP hydrolysis by CysD. This Xanthomonas euvesicatoria pv. vesicatoria (strain 85-10) (Xanthomonas campestris pv. vesicatoria) protein is Sulfate adenylyltransferase subunit 2.